The primary structure comprises 594 residues: Glutamate decarboxylase 1 (594 aa).

Positions 1–13 (MASSTPSSSATSS) are enriched in low complexity. Residues 1–23 (MASSTPSSSATSSNAGADPNTTN) are disordered. Serine 78 is modified (phosphoserine). 190–192 (QLS) contributes to the 4-aminobutanoate binding site. At lysine 405 the chain carries N6-(pyridoxal phosphate)lysine. Arginine 567 is a binding site for 4-aminobutanoate.

Belongs to the group II decarboxylase family. In terms of assembly, homodimer. Requires pyridoxal 5'-phosphate as cofactor.

It carries out the reaction L-glutamate + H(+) = 4-aminobutanoate + CO2. Functionally, catalyzes the synthesis of the inhibitory neurotransmitter gamma-aminobutyric acid (GABA) with pyridoxal 5'-phosphate as cofactor. The polypeptide is Glutamate decarboxylase 1 (GAD1) (Pan troglodytes (Chimpanzee)).